A 101-amino-acid polypeptide reads, in one-letter code: Small ribosomal subunit protein uS14 (101 aa).

This sequence belongs to the universal ribosomal protein uS14 family. Part of the 30S ribosomal subunit. Contacts proteins S3 and S10.

Binds 16S rRNA, required for the assembly of 30S particles and may also be responsible for determining the conformation of the 16S rRNA at the A site. The sequence is that of Small ribosomal subunit protein uS14 from Roseobacter denitrificans (strain ATCC 33942 / OCh 114) (Erythrobacter sp. (strain OCh 114)).